The chain runs to 204 residues: Somatotropin (204 aa).

Positions M1 to S17 are cleaved as a signal peptide. Pyrrolidone carboxylic acid is present on Q18. H36 provides a ligand contact to Zn(2+). An intrachain disulfide couples C69 to C177. E186 is a binding site for Zn(2+). A disulfide bridge connects residues C194 and C202.

The protein belongs to the somatotropin/prolactin family.

Its subcellular location is the secreted. In terms of biological role, growth hormone plays an important role in growth control and is involved in the regulation of several anabolic processes. Implicated as an osmoregulatory substance important for seawater adaptation. This Acanthopagrus butcheri (Australian black bream) protein is Somatotropin (gh).